The following is a 503-amino-acid chain: Alpha-1,3/1,6-mannosyltransferase ALG2 (503 aa).

2 helical membrane passes run 64 to 84 and 112 to 132; these read VYGD…FATI and TCIP…CHFP. N-linked (GlcNAc...) asparagine glycosylation is found at Asn-170, Asn-303, Asn-371, and Asn-400. A helical transmembrane segment spans residues 443–463; it reads WEIFGISFSNFILHMAFIKIL.

The protein belongs to the glycosyltransferase group 1 family. Glycosyltransferase 4 subfamily. In terms of assembly, interacts with ALG1.

It is found in the endoplasmic reticulum membrane. It catalyses the reaction a beta-D-Man-(1-&gt;4)-beta-D-GlcNAc-(1-&gt;4)-alpha-D-GlcNAc-diphospho-di-trans,poly-cis-dolichol + GDP-alpha-D-mannose = an alpha-D-Man-(1-&gt;3)-beta-D-Man-(1-&gt;4)-beta-D-GlcNAc-(1-&gt;4)-alpha-D-GlcNAc-diphospho-di-trans,poly-cis-dolichol + GDP + H(+). The catalysed reaction is an alpha-D-Man-(1-&gt;3)-beta-D-Man-(1-&gt;4)-beta-D-GlcNAc-(1-&gt;4)-alpha-D-GlcNAc-diphospho-di-trans,poly-cis-dolichol + GDP-alpha-D-mannose = an alpha-D-Man-(1-&gt;3)-[alpha-D-Man-(1-&gt;6)]-beta-D-Man-(1-&gt;4)-beta-D-GlcNAc-(1-&gt;4)-alpha-D-GlcNAc-diphospho-di-trans,poly-cis-dolichol + GDP + H(+). It functions in the pathway protein modification; protein glycosylation. Its function is as follows. Mannosylates Man(2)GlcNAc(2)-dolichol diphosphate and Man(1)GlcNAc(2)-dolichol diphosphate to form Man(3)GlcNAc(2)-dolichol diphosphate. The polypeptide is Alpha-1,3/1,6-mannosyltransferase ALG2 (ALG2) (Saccharomyces cerevisiae (strain ATCC 204508 / S288c) (Baker's yeast)).